Here is a 301-residue protein sequence, read N- to C-terminus: GTPase Era (301 aa).

One can recognise an Era-type G domain in the interval 6-173 (KSGFVAIVGR…LEQTNANLEI (168 aa)). Residues 14–21 (GRPNVGKS) form a G1 region. 14–21 (GRPNVGKS) contributes to the GTP binding site. A G2 region spans residues 40 to 44 (QTTRN). The G3 stretch occupies residues 61-64 (DTPG). Residues 61-65 (DTPGI) and 123-126 (NKID) contribute to the GTP site. Residues 123–126 (NKID) form a G4 region. A G5 region spans residues 152 to 154 (ISA). Residues 204-282 (TREEVPHSVA…FLEVWVKVQK (79 aa)) enclose the KH type-2 domain.

Belongs to the TRAFAC class TrmE-Era-EngA-EngB-Septin-like GTPase superfamily. Era GTPase family. As to quaternary structure, monomer.

It is found in the cytoplasm. The protein resides in the cell membrane. An essential GTPase that binds both GDP and GTP, with rapid nucleotide exchange. Plays a role in 16S rRNA processing and 30S ribosomal subunit biogenesis and possibly also in cell cycle regulation and energy metabolism. The sequence is that of GTPase Era from Listeria monocytogenes serotype 4a (strain HCC23).